A 251-amino-acid polypeptide reads, in one-letter code: Flap endonuclease Xni (251 aa).

Position 104 (D104) interacts with Mg(2+). Residues 160 to 249 (VLPRQLPDYW…IDGNLQQLRL (90 aa)) enclose the 5'-3' exonuclease domain. K(+)-binding residues include L171, A172, P180, V182, and I185. The segment at 184–189 (GIGPKS) is interaction with DNA.

This sequence belongs to the Xni family. Requires Mg(2+) as cofactor. The cofactor is K(+).

Its function is as follows. Has flap endonuclease activity. During DNA replication, flap endonucleases cleave the 5'-overhanging flap structure that is generated by displacement synthesis when DNA polymerase encounters the 5'-end of a downstream Okazaki fragment. In Salmonella heidelberg (strain SL476), this protein is Flap endonuclease Xni.